Reading from the N-terminus, the 183-residue chain is Dual-action ribosomal maturation protein DarP (183 aa).

Belongs to the DarP family.

The protein resides in the cytoplasm. In terms of biological role, member of a network of 50S ribosomal subunit biogenesis factors which assembles along the 30S-50S interface, preventing incorrect 23S rRNA structures from forming. Promotes peptidyl transferase center (PTC) maturation. The protein is Dual-action ribosomal maturation protein DarP of Salmonella paratyphi A (strain ATCC 9150 / SARB42).